The sequence spans 831 residues: Maltodextrin phosphorylase (831 aa).

The residue at position 592 (lysine 592) is an N6-(pyridoxal phosphate)lysine.

The protein belongs to the glycogen phosphorylase family. In terms of assembly, trimer (at 25 degrees Celsius). Pyridoxal 5'-phosphate serves as cofactor.

It catalyses the reaction [(1-&gt;4)-alpha-D-glucosyl](n) + phosphate = [(1-&gt;4)-alpha-D-glucosyl](n-1) + alpha-D-glucose 1-phosphate. Phosphorylase is an important allosteric enzyme in carbohydrate metabolism. Catalyzes the phospholytic cleavage of maltodextrins with a minimal chain length of five glucose residues to yield glucose-1-phosphate. Low activity with tetraose and no activity with triose and maltose. Long maltodextrins (8 to 15 glucose units), amylose and starch are not as good substrates as maltoheptaose. This chain is Maltodextrin phosphorylase (malP), found in Thermococcus litoralis (strain ATCC 51850 / DSM 5473 / JCM 8560 / NS-C).